We begin with the raw amino-acid sequence, 106 residues long: ATP synthase-coupling factor 6, mitochondrial (106 aa).

This sequence belongs to the eukaryotic ATPase subunit F6 family. In terms of assembly, F-type ATPases have 2 components, CF(1) - the catalytic core - and CF(0) - the membrane proton channel. CF(0) seems to have nine subunits: a, b, c, d, e, f, g, F6 and 8 (or A6L).

The protein localises to the mitochondrion. The protein resides in the mitochondrion inner membrane. Its function is as follows. Mitochondrial membrane ATP synthase (F(1)F(0) ATP synthase or Complex V) produces ATP from ADP in the presence of a proton gradient across the membrane which is generated by electron transport complexes of the respiratory chain. F-type ATPases consist of two structural domains, F(1) - containing the extramembraneous catalytic core and F(0) - containing the membrane proton channel, linked together by a central stalk and a peripheral stalk. During catalysis, ATP synthesis in the catalytic domain of F(1) is coupled via a rotary mechanism of the central stalk subunits to proton translocation. Part of the complex F(0) domain and the peripheric stalk, which acts as a stator to hold the catalytic alpha(3)beta(3) subcomplex and subunit a/ATP6 static relative to the rotary elements. This is ATP synthase-coupling factor 6, mitochondrial from Drosophila melanogaster (Fruit fly).